A 128-amino-acid chain; its full sequence is Ribonuclease P protein component (128 aa).

It belongs to the RnpA family. Consists of a catalytic RNA component (M1 or rnpB) and a protein subunit.

The enzyme catalyses Endonucleolytic cleavage of RNA, removing 5'-extranucleotides from tRNA precursor.. Functionally, RNaseP catalyzes the removal of the 5'-leader sequence from pre-tRNA to produce the mature 5'-terminus. It can also cleave other RNA substrates such as 4.5S RNA. The protein component plays an auxiliary but essential role in vivo by binding to the 5'-leader sequence and broadening the substrate specificity of the ribozyme. This is Ribonuclease P protein component from Synechococcus sp. (strain CC9902).